A 341-amino-acid polypeptide reads, in one-letter code: Brain-specific homeobox/POU domain protein 3 (341 aa).

A POU-IV box motif is present at residues 55–65; it reads RGAEALAAVDI. The POU-specific domain maps to 182-259; that stretch reads ETETDPRELE…ILEAWLEEAE (78 aa). The segment at residues 277 to 336 is a DNA-binding region (homeobox); it reads KKRKRTSIAAPEKRSLEAYFAVQPRPSSEKIAAIAEKLDLKKNVVRVWFCNQRQKQKRMK.

This sequence belongs to the POU transcription factor family. Class-4 subfamily.

Its subcellular location is the nucleus. In terms of biological role, may play a role in specifying terminally differentiated neuronal phenotypes. This Gallus gallus (Chicken) protein is Brain-specific homeobox/POU domain protein 3 (BRN3).